A 216-amino-acid polypeptide reads, in one-letter code: 3-isopropylmalate dehydratase small subunit (216 aa).

The protein belongs to the LeuD family. LeuD type 1 subfamily. As to quaternary structure, heterodimer of LeuC and LeuD.

It carries out the reaction (2R,3S)-3-isopropylmalate = (2S)-2-isopropylmalate. Its pathway is amino-acid biosynthesis; L-leucine biosynthesis; L-leucine from 3-methyl-2-oxobutanoate: step 2/4. Catalyzes the isomerization between 2-isopropylmalate and 3-isopropylmalate, via the formation of 2-isopropylmaleate. The sequence is that of 3-isopropylmalate dehydratase small subunit from Methylibium petroleiphilum (strain ATCC BAA-1232 / LMG 22953 / PM1).